Consider the following 173-residue polypeptide: Lipoprotein signal peptidase (173 aa).

4 helical membrane-spanning segments follow: residues 14–34, 44–64, 72–92, and 98–118; these read LAWL…KYYF, IIVI…AAFS, WQRW…VVWL, and DDTW…GNLY. Active-site residues include Asp-128 and Asp-147. A helical membrane pass occupies residues 139–159; the sequence is YFPAFNVADSAITVGAIMLAL.

The protein belongs to the peptidase A8 family.

The protein resides in the cell inner membrane. It carries out the reaction Release of signal peptides from bacterial membrane prolipoproteins. Hydrolyzes -Xaa-Yaa-Zaa-|-(S,diacylglyceryl)Cys-, in which Xaa is hydrophobic (preferably Leu), and Yaa (Ala or Ser) and Zaa (Gly or Ala) have small, neutral side chains.. Its pathway is protein modification; lipoprotein biosynthesis (signal peptide cleavage). This protein specifically catalyzes the removal of signal peptides from prolipoproteins. The polypeptide is Lipoprotein signal peptidase (Pseudomonas syringae pv. tomato (strain ATCC BAA-871 / DC3000)).